The sequence spans 123 residues: Large ribosomal subunit protein uL14 (123 aa).

It belongs to the universal ribosomal protein uL14 family. As to quaternary structure, part of the 50S ribosomal subunit. Forms a cluster with proteins L3 and L19. In the 70S ribosome, L14 and L19 interact and together make contacts with the 16S rRNA in bridges B5 and B8.

In terms of biological role, binds to 23S rRNA. Forms part of two intersubunit bridges in the 70S ribosome. The protein is Large ribosomal subunit protein uL14 of Aliivibrio fischeri (strain ATCC 700601 / ES114) (Vibrio fischeri).